We begin with the raw amino-acid sequence, 242 residues long: Zinc import ATP-binding protein ZnuC (242 aa).

The 218-residue stretch at 24-241 folds into the ABC transporter domain; it reads INVKNLSFFY…EKFLKMFSSY (218 aa). 56-63 contributes to the ATP binding site; sequence GPNGGGKT.

This sequence belongs to the ABC transporter superfamily. Zinc importer (TC 3.A.1.15.5) family. The complex is composed of two ATP-binding proteins (ZnuC), two transmembrane proteins (ZnuB) and a solute-binding protein (ZnuA).

The protein localises to the cell inner membrane. The enzyme catalyses Zn(2+)(out) + ATP(in) + H2O(in) = Zn(2+)(in) + ADP(in) + phosphate(in) + H(+)(in). Functionally, part of the ABC transporter complex ZnuABC involved in zinc import. Responsible for energy coupling to the transport system. The protein is Zinc import ATP-binding protein ZnuC of Ehrlichia canis (strain Jake).